Reading from the N-terminus, the 166-residue chain is uncharacterized protein (166 aa).

Pentapeptide repeat domains lie at 38–77, 78–117, and 118–157; these read GECL…NLRR, ALLD…NLER, and SFLR…EFWE.

This is an uncharacterized protein from Synechocystis sp. (strain ATCC 27184 / PCC 6803 / Kazusa).